The primary structure comprises 1175 residues: 1-phosphatidylinositol 4,5-bisphosphate phosphodiesterase beta-4 (1175 aa).

Ala-2 bears the N-acetylalanine mark. The region spanning 313 to 463 (QEMDHPLAHY…LKRKILIKNK (151 aa)) is the PI-PLC X-box domain. Catalysis depends on residues His-328 and His-375. The disordered stretch occupies residues 482–511 (EAGESASPANILEDDNEEEIESADQEEEAH). The segment covering 493 to 508 (LEDDNEEEIESADQEE) has biased composition (acidic residues). Residues 565 to 681 (LSTMINYAQP…GYLLKPDFMR (117 aa)) form the PI-PLC Y-box domain. Positions 684–809 (DRTFDPFSET…SLRNEGNKPL (126 aa)) constitute a C2 domain. Disordered stretches follow at residues 863-895 (ADVP…ELRP) and 1082-1110 (KISM…VREL). Composition is skewed to polar residues over residues 881–895 (AKAN…ELRP) and 1085–1094 (MENSKAISQD). At Thr-886 the chain carries Phosphothreonine. A compositionally biased stretch (basic and acidic residues) spans 1095–1109 (KSIKNKAERERRVRE).

Ca(2+) serves as cofactor. As to expression, preferentially expressed in the retina.

The protein localises to the cell membrane. The enzyme catalyses a 1,2-diacyl-sn-glycero-3-phospho-(1D-myo-inositol-4,5-bisphosphate) + H2O = 1D-myo-inositol 1,4,5-trisphosphate + a 1,2-diacyl-sn-glycerol + H(+). It catalyses the reaction a 1,2-diacyl-sn-glycero-3-phospho-(1D-myo-inositol) + H2O = 1D-myo-inositol 1-phosphate + a 1,2-diacyl-sn-glycerol + H(+). In terms of biological role, activated phosphatidylinositol-specific phospholipase C enzymes catalyze the production of the second messenger molecules diacylglycerol (DAG) and inositol 1,4,5-trisphosphate (IP3) involved in G-protein coupled receptor signaling pathways. PLCB4 is a direct effector of the endothelin receptor signaling pathway that plays an essential role in lower jaw and middle ear structures development. This chain is 1-phosphatidylinositol 4,5-bisphosphate phosphodiesterase beta-4, found in Homo sapiens (Human).